A 441-amino-acid polypeptide reads, in one-letter code: Endothelin receptor type B (441 aa).

Residues Met-1–Ala-26 form the signal peptide. Residues Glu-27 to Lys-100 lie on the Extracellular side of the membrane. Positions Glu-30 to Pro-87 are disordered. Low complexity predominate over residues Pro-41–Thr-53. The span at Ser-54–Pro-70 shows a compositional bias: polar residues. A helical membrane pass occupies residues Tyr-101 to Ile-125. Residues Tyr-126–Asn-136 are Cytoplasmic-facing. The helical transmembrane segment at Ile-137–Leu-162 threads the bilayer. The Extracellular segment spans residues Ala-163–Lys-174. An intrachain disulfide couples Cys-173 to Cys-254. Residues Leu-175 to Ile-196 form a helical membrane-spanning segment. Topologically, residues Asp-197–Thr-217 are cytoplasmic. Residues Ala-218–Ile-242 traverse the membrane as a helical segment. Over Thr-243–Thr-270 the chain is Extracellular. Residues Ala-271 to Met-295 traverse the membrane as a helical segment. Residues Thr-296–Thr-323 lie on the Cytoplasmic side of the membrane. Position 304 is a phosphoserine (Ser-304). Residues Val-324 to Tyr-349 traverse the membrane as a helical segment. Residues Asp-350–Ser-361 lie on the Extracellular side of the membrane. The chain crosses the membrane as a helical span at residues Phe-362–Val-388. The Cytoplasmic portion of the chain corresponds to Ser-389 to Ser-441. S-palmitoyl cysteine attachment occurs at residues Cys-402 and Cys-404. Ser-418, Ser-434, and Ser-435 each carry phosphoserine. Residue Tyr-438 is modified to Phosphotyrosine. 3 positions are modified to phosphoserine: Ser-439, Ser-440, and Ser-441.

It belongs to the G-protein coupled receptor 1 family. Endothelin receptor subfamily. EDNRB sub-subfamily. Post-translationally, it is not sure whether phosphorylation is on Ser-434 or Ser-435.

Its subcellular location is the cell membrane. Its function is as follows. Non-specific receptor for endothelin 1, 2, and 3. Mediates its action by association with G proteins that activate a phosphatidylinositol-calcium second messenger system. The polypeptide is Endothelin receptor type B (EDNRB) (Bos taurus (Bovine)).